Here is a 480-residue protein sequence, read N- to C-terminus: Docking protein 1 (480 aa).

M1 is subject to N-acetylmethionine. In terms of domain architecture, PH spans 3 to 119 (GALMEGPLFL…WVQILCRTAF (117 aa)). S48 is modified (phosphoserine). The IRS-type PTB domain maps to 151–259 (EGSQFWVTSQ…QQQKAQGKVG (109 aa)). Residues 253–262 (KAQGKVGQGQ) are compositionally biased toward low complexity. Residues 253–328 (KAQGKVGQGQ…GSTPAGAGEG (76 aa)) form a disordered region. Over residues 265-276 (TRTDSHDGETEG) the composition is skewed to basic and acidic residues. Residues S269 and S290 each carry the phosphoserine modification. 3 positions are modified to phosphotyrosine: Y295, Y336, and Y340. Position 361 is a phosphotyrosine; by INSR (Y361). The residue at position 376 (Y376) is a Phosphotyrosine. Y397 carries the phosphotyrosine; by INSR modification. The segment at 398–480 (ELPYNPATDD…RVGVKSEGST (83 aa)) is disordered. A Phosphotyrosine modification is found at Y408. Residues 410 to 423 (VPPPRSSKPTPAPK) are compositionally biased toward pro residues. Position 415 is a phosphoserine (S415). A compositionally biased stretch (low complexity) spans 432-445 (SGTTAGSGSKGSDT). A compositionally biased stretch (polar residues) spans 446–455 (ALYSQVQKSG). A Phosphotyrosine modification is found at Y448.

The protein belongs to the DOK family. Type A subfamily. Interacts with RasGAP and INPP5D/SHIP1. Interacts directly with phosphorylated ITGB3. Interacts with SRMS (via the SH2 and SH3 domains). In terms of processing, constitutively tyrosine-phosphorylated. Phosphorylated by TEC. Phosphorylated by LYN. Phosphorylated on tyrosine residues by the insulin receptor kinase. Results in the negative regulation of the insulin signaling pathway. Phosphorylated on tyrosine residues by SRMS.

It localises to the cytoplasm. The protein resides in the nucleus. Functionally, DOK proteins are enzymatically inert adaptor or scaffolding proteins. They provide a docking platform for the assembly of multimolecular signaling complexes. DOK1 appears to be a negative regulator of the insulin signaling pathway. Modulates integrin activation by competing with talin for the same binding site on ITGB3. The protein is Docking protein 1 (Dok1) of Rattus norvegicus (Rat).